The chain runs to 202 residues: Na(+)-translocating NADH-quinone reductase subunit E (202 aa).

6 helical membrane passes run 11 to 31, 35 to 55, 81 to 101, 114 to 134, 144 to 164, and 180 to 200; these read SVFI…FIAV, IETA…TVPA, FIAL…LEMV, GIFL…LFMI, VVYG…MAGV, and LGIT…FSGI.

It belongs to the NqrDE/RnfAE family. Composed of six subunits; NqrA, NqrB, NqrC, NqrD, NqrE and NqrF.

The protein resides in the cell inner membrane. It carries out the reaction a ubiquinone + n Na(+)(in) + NADH + H(+) = a ubiquinol + n Na(+)(out) + NAD(+). In terms of biological role, NQR complex catalyzes the reduction of ubiquinone-1 to ubiquinol by two successive reactions, coupled with the transport of Na(+) ions from the cytoplasm to the periplasm. NqrA to NqrE are probably involved in the second step, the conversion of ubisemiquinone to ubiquinol. This is Na(+)-translocating NADH-quinone reductase subunit E from Methylococcus capsulatus (strain ATCC 33009 / NCIMB 11132 / Bath).